The following is a 484-amino-acid chain: Dual specificity protein kinase CLK1 (484 aa).

The segment at 1–42 is disordered; that stretch reads MRHSKRTYCPDWDDKDWDYGKWRSSSSHKRRKRSHSSAQENK. Residues 26–35 show a composition bias toward basic residues; sequence SSHKRRKRSH. Position 61 is a phosphoserine (serine 61). The interval 79-146 is disordered; it reads DYTQGCEPGH…RTRSVEDDEE (68 aa). A compositionally biased stretch (basic and acidic residues) spans 86 to 97; sequence PGHRQRDHESRY. Residues 100 to 112 show a composition bias toward low complexity; it reads HSSKSSGRSGRSS. Basic residues predominate over residues 113–138; that stretch reads YKSKHRIHHSTSHRRSHGKSHRRKRT. Threonine 138 bears the Phosphothreonine mark. Phosphoserine is present on serine 140. Residues 161 to 477 form the Protein kinase domain; the sequence is YEIVDTLGEG…LREALKHPFF (317 aa). ATP contacts are provided by residues 167–175 and lysine 191; that span reads LGEGAFGKV. The Proton acceptor role is filled by aspartate 288.

This sequence belongs to the protein kinase superfamily. CMGC Ser/Thr protein kinase family. Lammer subfamily. As to quaternary structure, interacts with PPIG and UBL5. Post-translationally, autophosphorylates on all three types of residues. As to expression, endothelial cells.

The protein localises to the nucleus. It catalyses the reaction L-seryl-[protein] + ATP = O-phospho-L-seryl-[protein] + ADP + H(+). The enzyme catalyses L-threonyl-[protein] + ATP = O-phospho-L-threonyl-[protein] + ADP + H(+). The catalysed reaction is L-tyrosyl-[protein] + ATP = O-phospho-L-tyrosyl-[protein] + ADP + H(+). Regulates splicing of its own pre-mRNA according to its kinase activity; increased expression of the catalytically active form influences splicing to generate the catalytically inactive splicing variant lacking the kinase domain. Leucettine L41 inhibits its kinase activity and affects the regulation of alternative splicing mediated by phosphorylation of SR proteins. Dual specificity kinase acting on both serine/threonine and tyrosine-containing substrates. Phosphorylates serine- and arginine-rich (SR) proteins of the spliceosomal complex and may be a constituent of a network of regulatory mechanisms that enable SR proteins to control RNA splicing. Phosphorylates: SRSF1, SRSF3 and PTPN1. Regulates the alternative splicing of tissue factor (F3) pre-mRNA in endothelial cells. In Homo sapiens (Human), this protein is Dual specificity protein kinase CLK1.